The following is a 65-amino-acid chain: Large ribosomal subunit protein bL35 (65 aa).

Belongs to the bacterial ribosomal protein bL35 family.

The protein is Large ribosomal subunit protein bL35 of Sodalis glossinidius (strain morsitans).